The primary structure comprises 579 residues: Glypican-3 (579 aa).

An N-terminal signal peptide occupies residues 1-24 (MAGTVRTACLLVAMLLGLGCLGQA). Q25 carries the pyrrolidone carboxylic acid modification. 7 disulfides stabilise this stretch: C34–C71, C64–C261, C72–C264, C196–C348, C251–C284, C273–C421, and C277–C409. N-linked (GlcNAc...) asparagine glycosylation is found at N123 and N240. Phosphoserine is present on S351. N417 carries N-linked (GlcNAc...) asparagine glycosylation. S494 and S508 each carry an O-linked (Xyl...) (glycosaminoglycan) serine glycan. A disordered region spans residues 533-552 (DAPGNKQHGNQKDNEITTSH). A lipid anchor (GPI-anchor amidated serine) is attached at S553. Residues 554–579 (VGNMPSPLKILISVAIYVACFFFLVH) constitute a propeptide, removed in mature form.

It belongs to the glypican family. In terms of assembly, heterodimer; disulfide-linked. Cleavage by a furin-like convertase results in production of alpha and beta chains which form a disulfide-linked heterodimer. Interacts with DPP4. Interacts with FGF2. Interacts with WNT5A. Also interacts with WNT3A and WNT7B. Interacts with hedgehog protein SHH; the heparan sulfate chains are not required for the interaction. Also interacts with hedgehog protein IHH. Interacts with CD81. Interacts with Wnt receptors FZD4, FZD7 and FZD8; the heparan sulfate chains are required for the interaction. O-glycosylated; contains heparan sulfate and/or chondroitin sulfate. Post-translationally, cleaved intracellularly by a furin-like convertase to generate 2 subunits, alpha and beta, which remain associated through disulfide bonds and are associated with the cell surface via the GPI-anchor. This processing is essential for its role in inhibition of hedgehog signaling. A second proteolytic event may result in cleavage of the protein on the cell surface, separating it from the GPI-anchor and leading to its shedding from the cell surface. In the developing limb, absent from the apical epidermal ridge at 11 dpc but highly expressed in the underlying mesenchyme. Expression in the mesenchyme at this stage is asymmetric with highest levels in the regions of the distal mesenchyme within the progress zone and within the proximal anterior and posterior limb bud. At later developmental stages including 12.5 and 13.5 dpc, expression is restricted to the interdigital webs and the regions of chondrocytic differentiation of the developing bones. In the embryonic kidney, expressed in both the ureteric bud and mesenchymal cells as early as 13.5 dpc. Expression at 16.5 dpc is similar to that at 13.5 dpc but decreases by 18.5 dpc.

It is found in the cell membrane. Its function is as follows. Cell surface proteoglycan. Negatively regulates the hedgehog signaling pathway when attached via the GPI-anchor to the cell surface by competing with the hedgehog receptor PTC1 for binding to hedgehog proteins. Binding to the hedgehog protein SHH triggers internalization of the complex by endocytosis and its subsequent lysosomal degradation. Positively regulates the canonical Wnt signaling pathway by binding to the Wnt receptor Frizzled and stimulating the binding of the Frizzled receptor to Wnt ligands. Positively regulates the non-canonical Wnt signaling pathway. Binds to CD81 which decreases the availability of free CD81 for binding to the transcriptional repressor HHEX, resulting in nuclear translocation of HHEX and transcriptional repression. Inhibits the dipeptidyl peptidase activity of DPP4. Plays a role in limb patterning and skeletal development by controlling the cellular response to BMP4. Modulates the effects of growth factors BMP2, BMP7 and FGF7 on renal branching morphogenesis. Required for coronary vascular development. Plays a role in regulating cell movements during gastrulation. The polypeptide is Glypican-3 (Gpc3) (Mus musculus (Mouse)).